Consider the following 430-residue polypeptide: Adenylosuccinate synthetase (430 aa).

GTP is bound by residues 12–18 and 40–42; these read GDEGKGK and GHT. Aspartate 13 acts as the Proton acceptor in catalysis. Aspartate 13 and glycine 40 together coordinate Mg(2+). IMP is bound by residues 13–16, 38–41, threonine 129, arginine 143, glutamine 224, threonine 239, and arginine 303; these read DEGK and NAGH. The active-site Proton donor is the histidine 41. 299 to 305 contributes to the substrate binding site; that stretch reads ATTGRRR. Residues arginine 305, 331 to 333, and 413 to 415 each bind GTP; these read KLD and SVG.

Belongs to the adenylosuccinate synthetase family. In terms of assembly, homodimer. Requires Mg(2+) as cofactor.

It localises to the cytoplasm. The catalysed reaction is IMP + L-aspartate + GTP = N(6)-(1,2-dicarboxyethyl)-AMP + GDP + phosphate + 2 H(+). It functions in the pathway purine metabolism; AMP biosynthesis via de novo pathway; AMP from IMP: step 1/2. In terms of biological role, plays an important role in the de novo pathway of purine nucleotide biosynthesis. Catalyzes the first committed step in the biosynthesis of AMP from IMP. This Desulfatibacillum aliphaticivorans protein is Adenylosuccinate synthetase.